The sequence spans 527 residues: RUS family member 1 (527 aa).

Asparagine 21 is a glycosylation site (N-linked (GlcNAc...) asparagine). Residues 220–240 (SQETAVNLVGMLLSVIVSSFI) form a helical membrane-spanning segment. N-linked (GlcNAc...) asparagine glycosylation is present at asparagine 243. Residues 245-265 (SLIVTWLVFLFFTSLHLFCNY) traverse the membrane as a helical segment. Asparagine 346 is a glycosylation site (N-linked (GlcNAc...) asparagine). The interval 350–426 (TKNVNNNNNN…NNNNNNNNNK (77 aa)) is disordered. Residues asparagine 467 and asparagine 497 are each glycosylated (N-linked (GlcNAc...) asparagine).

The protein belongs to the RUS1 family.

The protein localises to the membrane. The protein is RUS family member 1 (rusf1) of Dictyostelium discoideum (Social amoeba).